Consider the following 297-residue polypeptide: Pyrroline-5-carboxylate reductase 1 (297 aa).

Belongs to the pyrroline-5-carboxylate reductase family.

It localises to the cytoplasm. The catalysed reaction is L-proline + NADP(+) = (S)-1-pyrroline-5-carboxylate + NADPH + 2 H(+). It catalyses the reaction L-proline + NAD(+) = (S)-1-pyrroline-5-carboxylate + NADH + 2 H(+). The protein operates within amino-acid biosynthesis; L-proline biosynthesis; L-proline from L-glutamate 5-semialdehyde: step 1/1. Functionally, catalyzes the reduction of 1-pyrroline-5-carboxylate (PCA) to L-proline. The sequence is that of Pyrroline-5-carboxylate reductase 1 (proH) from Bacillus spizizenii (strain ATCC 23059 / NRRL B-14472 / W23) (Bacillus subtilis subsp. spizizenii).